The sequence spans 392 residues: DNA replication and repair protein RecF (392 aa).

30–37 contributes to the ATP binding site; that stretch reads GPNAAGKT.

Belongs to the RecF family.

Its subcellular location is the cytoplasm. Functionally, the RecF protein is involved in DNA metabolism; it is required for DNA replication and normal SOS inducibility. RecF binds preferentially to single-stranded, linear DNA. It also seems to bind ATP. In Chloroflexus aggregans (strain MD-66 / DSM 9485), this protein is DNA replication and repair protein RecF.